The primary structure comprises 25 residues: C-type natriuretic peptide (25 aa).

An intrachain disulfide couples Cys9 to Cys25.

As to expression, venom gland.

It is found in the secreted. Its function is as follows. Snake venom natriuretic peptide that has a vasorelaxant activity in rat aortic strips and a diuretic potency in anesthetized rats. May act by activating natriuretic receptors (NPR1 and/or NPR2). This chain is C-type natriuretic peptide, found in Crotalus atrox (Western diamondback rattlesnake).